Here is a 304-residue protein sequence, read N- to C-terminus: Syntaxin-132 (304 aa).

Met1 carries the post-translational modification N-acetylmethionine. A disordered region spans residues 1–30; sequence MNDLLKGSFELPRGQSSREGDVELGEQQGG. The Cytoplasmic segment spans residues 1–275; it reads MNDLLKGSFE…AKSLQKNSRK (275 aa). Coiled coils occupy residues 34-67 and 129-162; these read LEDF…ESKS and TLSL…DRRV. One can recognise a t-SNARE coiled-coil homology domain in the interval 204-266; the sequence is LAEIQERHDA…QSGNTALQRA (63 aa). A helical; Anchor for type IV membrane protein transmembrane segment spans residues 276 to 296; that stretch reads WMCIAIIILLIVVAVIVVGVL. The Vesicular segment spans residues 297 to 304; it reads KPWKNKSA.

Belongs to the syntaxin family. As to quaternary structure, part of the t-SNARE complex. Widely expressed in all tissues throughout plant development.

It localises to the cell membrane. Functionally, vesicle trafficking protein that functions in the secretory pathway. Acts in coordination with SYP123 to mediate tip-focused membrane trafficking for root hair tip growth. Functions in root hair elongation by forming SNARE complexes with VAMP721,VAMP722 or VAMP724. Involved in cytokinesis. Acts as a cell plate-specific syntaxin, required for the fusion of vesicles at the plane of cell division. Required for secretory trafficking to the plasma membrane during interphase. Involved in the regulation of density of the H(+) ATPase proteins at the plasma membrane of root and shoot in epidermal cells. Modulation of SYP132 expression by auxin affects clathrin-sensitive H(+) ATPase traffic from the plasma membrane, and influences apoplastic acidification and plant growth. This chain is Syntaxin-132, found in Arabidopsis thaliana (Mouse-ear cress).